The following is a 263-amino-acid chain: Small ribosomal subunit protein bS1c (263 aa).

S1 motif domains follow at residues 27 to 96 (GDIV…LSIR), 114 to 178 (DSLL…LSHR), and 192 to 260 (GNII…LSMK).

It belongs to the bacterial ribosomal protein bS1 family.

The protein localises to the plastid. It is found in the chloroplast. This is Small ribosomal subunit protein bS1c (rps1) from Pyropia yezoensis (Susabi-nori).